The chain runs to 229 residues: 2,3-bisphosphoglycerate-dependent phosphoglycerate mutase (229 aa).

Substrate-binding positions include 7-14 (RHGQSEWN), 20-21 (TG), R59, 86-89 (ERHY), K97, 113-114 (RR), and 182-183 (GN). H8 acts as the Tele-phosphohistidine intermediate in catalysis. E86 (proton donor/acceptor) is an active-site residue.

It belongs to the phosphoglycerate mutase family. BPG-dependent PGAM subfamily.

The catalysed reaction is (2R)-2-phosphoglycerate = (2R)-3-phosphoglycerate. The protein operates within carbohydrate degradation; glycolysis; pyruvate from D-glyceraldehyde 3-phosphate: step 3/5. Functionally, catalyzes the interconversion of 2-phosphoglycerate and 3-phosphoglycerate. The polypeptide is 2,3-bisphosphoglycerate-dependent phosphoglycerate mutase (Listeria monocytogenes serotype 4b (strain F2365)).